Reading from the N-terminus, the 342-residue chain is NADH-quinone oxidoreductase subunit H 1 (342 aa).

A run of 8 helical transmembrane segments spans residues 7–27, 78–98, 120–140, 166–186, 193–213, 245–265, 284–304, and 322–342; these read FLLE…VIAM, ALFI…GAVI, IGVL…MIGG, MGLS…GEIV, WWNI…SFAE, LFAE…FYFG, ILGT…FMWV, and KIMI…ILLF.

Belongs to the complex I subunit 1 family. NDH-1 is composed of 14 different subunits. Subunits NuoA, H, J, K, L, M, N constitute the membrane sector of the complex.

Its subcellular location is the cell inner membrane. It carries out the reaction a quinone + NADH + 5 H(+)(in) = a quinol + NAD(+) + 4 H(+)(out). Its function is as follows. NDH-1 shuttles electrons from NADH, via FMN and iron-sulfur (Fe-S) centers, to quinones in the respiratory chain. The immediate electron acceptor for the enzyme in this species is believed to be ubiquinone. Couples the redox reaction to proton translocation (for every two electrons transferred, four hydrogen ions are translocated across the cytoplasmic membrane), and thus conserves the redox energy in a proton gradient. This subunit may bind ubiquinone. The polypeptide is NADH-quinone oxidoreductase subunit H 1 (Cytophaga hutchinsonii (strain ATCC 33406 / DSM 1761 / CIP 103989 / NBRC 15051 / NCIMB 9469 / D465)).